We begin with the raw amino-acid sequence, 417 residues long: MEWPWSAIAASSSSSSSCFFASPNSCLSITRRTNLSCVNTSVKSLRHSRFDSKHNLVKRRINGDSVVRRSTTSNNSTEETESSSSSSSVDCVGMGSDVECVNNGEDEENRSSGILSGGEGTFLEWTVLISPFFFWGTAMVAMKEVLPITGPFFVAAFRLIPAGLLLVAFAVYKGRPLPEGINAWFSIALFALVDATCFQGFLAQGLQRTSAGLGSVIIDSQPLTVAVLASFLFGESIGIVRAGGLLLGVAGLLLLEVPSVTSDGNNFSLWGSGEWWMLLAAQSMAIGTVMVRWVSKYSDPIMATGWHMVIGGLPLLAISVINHDPVFNGSLQDLSTNDVIALLYTSIFGSAVSYGVYFYSATKGSLTKLSSLTFLTPMFASIFGYLYLNETFSSLQLVGAAVTLVAIYLVNFPEGND.

The N-terminal 68 residues, 1–68, are a transit peptide targeting the chloroplast; it reads MEWPWSAIAA…RRINGDSVVR (68 aa). The interval 67–92 is disordered; it reads VRRSTTSNNSTEETESSSSSSSVDCV. Over residues 68–89 the composition is skewed to low complexity; the sequence is RRSTTSNNSTEETESSSSSSSV. 10 consecutive transmembrane segments (helical) span residues 122–142, 152–172, 183–203, 213–233, 237–257, 269–289, 301–321, 339–359, 369–389, and 392–412; these read FLEW…MVAM, FFVA…FAVY, AWFS…GFLA, LGSV…SFLF, IGIV…LLEV, LWGS…IGTV, IMAT…ISVI, VIAL…VYFY, LSSL…LYLN, and FSSL…LVNF. EamA domains follow at residues 133 to 255 and 283 to 411; these read FFWG…LLLL and SMAI…YLVN.

This sequence belongs to the drug/metabolite transporter (DMT) superfamily. Plant drug/metabolite exporter (P-DME) (TC 2.A.7.4) family.

Its subcellular location is the plastid. It is found in the chloroplast membrane. The polypeptide is WAT1-related protein At3g02690, chloroplastic (Arabidopsis thaliana (Mouse-ear cress)).